The chain runs to 588 residues: Disabled homolog 1 (588 aa).

Positions 1–26 (MSTETELQVAVKTSAKKDSRKKGQDR) are disordered. Residues 15-26 (AKKDSRKKGQDR) are compositionally biased toward basic and acidic residues. The PID domain occupies 36–189 (KGEGVRYKAK…CEQAVYQTIL (154 aa)). A phosphotyrosine mark is found at Tyr-198, Tyr-220, and Tyr-232. Disordered regions lie at residues 417-443 (LTPLATVPGTSDSTRSSPQTDKPRQKM), 451-470 (FQMAQPPPVPSRKPDQPSLT), and 502-588 (LTPV…QAGS). Residues 424–436 (PGTSDSTRSSPQT) are compositionally biased toward polar residues. Composition is skewed to low complexity over residues 503–512 (TPVTSTTPST) and 520–534 (PRQSSPSKSSASHAS). The residue at position 524 (Ser-524) is a Phosphoserine; by CDK5. A compositionally biased stretch (acidic residues) spans 537 to 546 (TTDDIFEEGF).

In terms of assembly, associates with the SH2 domains of SRC, FYN and ABL. Interacts (phosphorylated on tyrosine residues) with CRK and CRKL (via respective SH2 domain). Interacts with SIAH1, LRP8 and VLDLR. Interacts with LRP1. Interacts with APLP1 (via NPXY motif). Interacts with DAB2IP. Interacts with ZSWIM8. In terms of processing, phosphorylated by FYN on Tyr-198 and Tyr-220 upon reelin induction in embryonic neurons. Also phosphorylated on Ser-524 independently of reelin signaling. Ubiquitinated by various cullin-5-RING E3 ubiquitin-protein ligase complexes (ECS complexes) following ligand-binding and phosphorylation, leading to its degradation. Ubiquitinated by the ECS(SOCS7) complex in the cortical plate of the developing cerebral cortex following ligand-binding and phosphorylation by FYN, leading to its degradation by the proteasome. Recognized by ZSWIM8 through a disorder targets misorder mechanism that eliminates misfolded DAB1 via ubiquitination and proteasomal degradation. As to expression, mainly expressed in brain.

It is found in the cytoplasm. Its function is as follows. Signaling adapter of the reelin-mediated signaling pathway, which regulates the migration and differentiation of postmitotic neurons during brain development. Mediates intracellular transduction of Reelin signaling following reelin (RELN)-binding to its receptor: acts by docking proteins through its phosphotyrosine residues and PID domain. The polypeptide is Disabled homolog 1 (DAB1) (Homo sapiens (Human)).